We begin with the raw amino-acid sequence, 1087 residues long: Apoptosis-stimulating of p53 protein 1 (1087 aa).

The segment at 82 to 122 (HEDSPTESSEQGARQTQEQRTQRSVVNVPGEKRTENGVGNP) is disordered. Residues 87–106 (TESSEQGARQTQEQRTQRSV) are compositionally biased toward polar residues. Phosphoserine is present on residues Ser332 and Ser335. Disordered regions lie at residues 374-415 (SSAA…GMEG), 442-721 (IGKG…PNIQ), and 734-878 (GMEG…TGHG). The span at 393-405 (KQNSASVKSTQMT) shows a compositional bias: polar residues. Over residues 445–458 (GPPPIPGVGKPLPP) the composition is skewed to pro residues. Residues 459–476 (SYGTYPSSGPLGPGSTSS) are compositionally biased toward low complexity. Positions 506–520 (NAPQPGSSQQIQQRI) are enriched in polar residues. Over residues 523 to 536 (PPSPTYPPAGPPAF) the composition is skewed to pro residues. At Arg552 the chain carries Asymmetric dimethylarginine. The span at 570 to 589 (QTVNSSSIYSMYLQQATPPK) shows a compositional bias: polar residues. Residues 610-625 (PVLPSGSASPSPLPFL) are compositionally biased toward low complexity. Residues Ser679 and Ser708 each carry the phosphoserine modification. Residues 805–831 (PQTTHQTAEPTEDNNNNVAPVPSTEQI) show a composition bias toward polar residues. 2 ANK repeats span residues 917-949 (EGIT…AADS) and 950-982 (DGWT…ASTI). One can recognise an SH3 domain in the interval 1016-1078 (MNKGTVYALW…PKNLLGLYPR (63 aa)).

Belongs to the ASPP family. Interacts with P53/TP53; the interaction promotes pro-apoptotic activity.

The protein resides in the cytoplasm. It localises to the nucleus. Regulator that plays a central role in regulation of apoptosis via its interaction with p53/TP53. Regulates TP53 by enhancing the DNA binding and transactivation function of TP53 on the promoters of proapoptotic genes in vivo. This is Apoptosis-stimulating of p53 protein 1 (Ppp1r13b) from Mus musculus (Mouse).